The following is a 350-amino-acid chain: Protein Wnt-2 (350 aa).

The N-terminal stretch at 1–25 (MNFLPNGICFYLSVAICWFSSRVDA) is a signal peptide. 11 disulfide bridges follow: Cys-74–Cys-85, Cys-125–Cys-133, Cys-135–Cys-155, Cys-204–Cys-218, Cys-206–Cys-213, Cys-276–Cys-307, Cys-292–Cys-302, Cys-306–Cys-346, Cys-322–Cys-337, Cys-324–Cys-334, and Cys-329–Cys-330. Asn-132 is a glycosylation site (N-linked (GlcNAc...) asparagine). A lipid anchor (O-palmitoleoyl serine; by PORCN) is attached at Ser-210. N-linked (GlcNAc...) asparagine glycosylation is present at Asn-293.

This sequence belongs to the Wnt family. Post-translationally, palmitoleoylation is required for efficient binding to frizzled receptors. Depalmitoleoylation leads to Wnt signaling pathway inhibition.

It is found in the secreted. The protein resides in the extracellular space. Its subcellular location is the extracellular matrix. Ligand for members of the frizzled family of seven transmembrane receptors. Functions in the canonical Wnt signaling pathway that results in activation of transcription factors of the TCF/LEF family. This chain is Protein Wnt-2 (wnt2), found in Danio rerio (Zebrafish).